Consider the following 320-residue polypeptide: Foldase protein PrsA (320 aa).

An N-terminal signal peptide occupies residues 1–20 (MKMINKLIVPVTASALLLGA). The N-palmitoyl cysteine moiety is linked to residue Cys-21. Cys-21 carries the S-diacylglycerol cysteine lipid modification. The PpiC domain maps to 139-245 (EDSKKASHIL…FGYHIIKADK (107 aa)). The interval 159–198 (EGLDDKEAKQKAEEIQKEVSKDPSKFGEIAKKESMDTGSA) is disordered.

It belongs to the PrsA family.

It localises to the cell membrane. The catalysed reaction is [protein]-peptidylproline (omega=180) = [protein]-peptidylproline (omega=0). Plays a major role in protein secretion by helping the post-translocational extracellular folding of several secreted proteins. The sequence is that of Foldase protein PrsA from Staphylococcus aureus (strain Mu3 / ATCC 700698).